A 361-amino-acid chain; its full sequence is Methyltransferase LUC1 (361 aa).

Residues Y18, N66, D89, S126, and F127 each coordinate S-adenosyl-L-homocysteine. Residues Q156 and F233 each coordinate Mg(2+).

It belongs to the methyltransferase superfamily. Type-7 methyltransferase family. The cofactor is Mg(2+).

The protein operates within mycotoxin biosynthesis. Methyltransferase; part of the gene cluster that mediates the biosynthesis of the mycotoxin lucilactaene and the lucilactaene-related compound NG-391 that act as cell cycle inhibitors with potent growth inhibitory activity against malarial parasites, moderate growth inhibitory activity against cancer cells, and no activity against bacteria and fungi. LUC1 performs the last step of the pathway and methylates the hydroxyl group of demethyllucilactaene at C-21 to yeald lucilactaene. The pathway begins with the hybrid PKS-NRPS synthetase LUC5 which is responsible for the condensation of one acetyl-coenzyme A (CoA) unit with six malonyl-CoA units and the amide linkage of the arising heptaketide and homoserine, subsequently releasing the first intermediate prelucilactaene B. Both the cytochrome P450 monooxygenase LUC2 and the hydrolase LUC6 function in parallel in modification of prelucilactaene B. LUC6 may catalyze the 2-pyrrolidone ring formation to form prelucilactaene C from prelucilactaene B, followed by C-15 hydroxylation by the same enzyme to give prelucilactaene D, which is then converted to prelucilactaene E by epoxidation, and finally to prelucilactaene F by cyclization. Prelucilactane D, prelucilactaene E, and prelucilactaene F can be converted to dihydrolucilactaene, NG391, and lucilactaene, respectively, via C-20 methyl group hydroxylation by the cytochrome P450 monooxygenase LUC2. However, LUC2, unlike FUS8 in fusarin C biosynthesis, is not enough for the full oxidation of the C-20 methyl group into carboxylic acid, which is a prerequisite for the final methylation step. The aldehyde dehydrogenase LUC3 is involved in the biosynthesis by further oxidation of the C-20 alcoholic analog prelucilactaene G into a carboxylic derivative. This unidentified carboxylic derivative may be converted to demethyllucilactaene. As the last step, the methyltransferase LUC1 methylates the hydroxyl group at C-21 of demethyllucilactaene to generate lucilactaene. The polypeptide is Methyltransferase LUC1 (Fusarium sp).